The chain runs to 319 residues: Dehydrogenase/reductase SDR family member 9 (319 aa).

The signal sequence occupies residues 1–20 (MLFWLLALLFLCAFLWNYKG). Residues 34–58 (ITGC…RVIA) and Asp-83 each bind NAD(+). Ser-164 is a substrate binding site. Tyr-176 functions as the Proton acceptor in the catalytic mechanism. Lys-180 is an NAD(+) binding site.

The protein belongs to the short-chain dehydrogenases/reductases (SDR) family. Homotetramer.

The protein localises to the microsome membrane. It is found in the endoplasmic reticulum membrane. The catalysed reaction is 3beta-hydroxy-5alpha-pregnane-20-one + NAD(+) = 5alpha-pregnane-3,20-dione + NADH + H(+). It carries out the reaction 17beta-hydroxy-5alpha-androstan-3-one + NAD(+) = 5alpha-androstan-3,17-dione + NADH + H(+). It catalyses the reaction androsterone + NAD(+) = 5alpha-androstan-3,17-dione + NADH + H(+). The enzyme catalyses 5alpha-androstane-3alpha,17beta-diol + NAD(+) = 17beta-hydroxy-5alpha-androstan-3-one + NADH + H(+). The catalysed reaction is all-trans-retinol + NAD(+) = all-trans-retinal + NADH + H(+). It carries out the reaction 3alpha-hydroxy-5alpha-pregnan-20-one + NAD(+) = 5alpha-pregnane-3,20-dione + NADH + H(+). In terms of biological role, 3-alpha-hydroxysteroid dehydrogenase that converts 3-alpha-tetrahydroprogesterone (allopregnanolone) to dihydroxyprogesterone and 3-alpha-androstanediol to dihydroxyprogesterone. Also plays a role in the biosynthesis of retinoic acid. Can utilize both NADH and NADPH. In Mus musculus (Mouse), this protein is Dehydrogenase/reductase SDR family member 9 (Dhrs9).